Consider the following 301-residue polypeptide: Glycine--tRNA ligase alpha subunit (301 aa).

This sequence belongs to the class-II aminoacyl-tRNA synthetase family. Tetramer of two alpha and two beta subunits.

Its subcellular location is the cytoplasm. It carries out the reaction tRNA(Gly) + glycine + ATP = glycyl-tRNA(Gly) + AMP + diphosphate. This is Glycine--tRNA ligase alpha subunit from Glaesserella parasuis serovar 5 (strain SH0165) (Haemophilus parasuis).